A 2148-amino-acid chain; its full sequence is Polyketide synthase 1 (2148 aa).

The tract at residues Phe-19–His-261 is N-terminal acylcarrier protein transacylase domain (SAT). A Ketosynthase family 3 (KS3) domain is found at Glu-394–Asp-829. Active-site for beta-ketoacyl synthase activity residues include Cys-566, His-701, and His-745. The malonyl-CoA:ACP transacylase (MAT) domain stretch occupies residues Phe-930 to Leu-1236. Ser-1018 acts as the For acyl/malonyl transferase activity in catalysis. The tract at residues Thr-1310–Pro-1624 is product template (PT) domain. Residues His-1314–Val-1447 are N-terminal hotdog fold. The PKS/mFAS DH domain occupies His-1314–Asn-1619. The Proton acceptor; for dehydratase activity role is filled by His-1346. A C-terminal hotdog fold region spans residues Leu-1474 to Asn-1619. Asp-1533 acts as the Proton donor; for dehydratase activity in catalysis. The interval Asn-1619–His-1655 is disordered. Residues Arg-1634 to Ser-1650 are compositionally biased toward low complexity. One can recognise a Carrier 1 domain in the interval Arg-1678 to Thr-1752. At Ser-1712 the chain carries O-(pantetheine 4'-phosphoryl)serine. Residues Ser-1755 to Pro-1790 are compositionally biased toward low complexity. The disordered stretch occupies residues Ser-1755 to Gly-1796. The region spanning Ser-1793–His-1870 is the Carrier 2 domain. Ser-1830 is modified (O-(pantetheine 4'-phosphoryl)serine). Residues Leu-1882–Thr-2146 are thioesterase (TE) domain. Residue Ser-1973 is the For thioesterase activity of the active site.

The protein operates within pigment biosynthesis. Its function is as follows. Polyketide synthase; part of the Pks1 gene cluster that mediates the biosynthesis of an anthraquinone derivative pigment that contributes to conidial pigmentation that provides protection from UV radiation, heat and cold stress. The polyketide synthase Pks1 produces 1-acetyl-2,4,6,8-tetrahydroxy-9,10-anthraquinone though condensation of acetyl-CoA with malonyl-CoA. The dehydratase EthD and the laccase Mlac1 further convert the anthraquinone derivative into the final conidial pigment. The polypeptide is Polyketide synthase 1 (Metarhizium robertsii (strain ARSEF 23 / ATCC MYA-3075) (Metarhizium anisopliae (strain ARSEF 23))).